A 567-amino-acid polypeptide reads, in one-letter code: Urease subunit alpha (567 aa).

Positions 129–567 constitute a Urease domain; sequence GGIDVHVHFI…VPMSQRYFLF (439 aa). Ni(2+)-binding residues include His-134, His-136, and Lys-217. Position 217 is an N6-carboxylysine (Lys-217). Residue His-219 coordinates substrate. His-246 and His-272 together coordinate Ni(2+). His-320 functions as the Proton donor in the catalytic mechanism. Asp-360 is a Ni(2+) binding site.

Belongs to the metallo-dependent hydrolases superfamily. Urease alpha subunit family. Heterotrimer of UreA (gamma), UreB (beta) and UreC (alpha) subunits. Three heterotrimers associate to form the active enzyme. The cofactor is Ni cation. Post-translationally, carboxylation allows a single lysine to coordinate two nickel ions.

Its subcellular location is the cytoplasm. The enzyme catalyses urea + 2 H2O + H(+) = hydrogencarbonate + 2 NH4(+). It functions in the pathway nitrogen metabolism; urea degradation; CO(2) and NH(3) from urea (urease route): step 1/1. This Blochmanniella floridana protein is Urease subunit alpha.